A 235-amino-acid chain; its full sequence is MKLGVNIDHVATLRNARGASYPDPLKAAKIAINAGADFLTVHLREDRRHIRDEDVFNLKQNISTELNLEIAATEEMLKIAKEVKPYSICIVPEKREELTTEGGLNIVNMHSKLSGIIEEMHSFDIKVSLFIDPNINQLKYLEKLERKPDIIEIHTGDYCDNPSEEKLKLITNSAEYINNLGIECHAGHGINYKHAKEIKKIPHISALNIGHSLISEAIFHGLHSVTKKMKMTISK.

N6 serves as a coordination point for 3-amino-2-oxopropyl phosphate. Residue 8 to 9 coordinates 1-deoxy-D-xylulose 5-phosphate; the sequence is DH. Position 17 (R17) interacts with 3-amino-2-oxopropyl phosphate. H42 serves as the catalytic Proton acceptor. 1-deoxy-D-xylulose 5-phosphate-binding residues include R44 and H49. Catalysis depends on E69, which acts as the Proton acceptor. A 1-deoxy-D-xylulose 5-phosphate-binding site is contributed by T99. H188 (proton donor) is an active-site residue. Residues G189 and 210–211 contribute to the 3-amino-2-oxopropyl phosphate site; that span reads GH.

The protein belongs to the PNP synthase family. Homooctamer; tetramer of dimers.

Its subcellular location is the cytoplasm. The enzyme catalyses 3-amino-2-oxopropyl phosphate + 1-deoxy-D-xylulose 5-phosphate = pyridoxine 5'-phosphate + phosphate + 2 H2O + H(+). It participates in cofactor biosynthesis; pyridoxine 5'-phosphate biosynthesis; pyridoxine 5'-phosphate from D-erythrose 4-phosphate: step 5/5. In terms of biological role, catalyzes the complicated ring closure reaction between the two acyclic compounds 1-deoxy-D-xylulose-5-phosphate (DXP) and 3-amino-2-oxopropyl phosphate (1-amino-acetone-3-phosphate or AAP) to form pyridoxine 5'-phosphate (PNP) and inorganic phosphate. This chain is Pyridoxine 5'-phosphate synthase, found in Wolbachia pipientis subsp. Culex pipiens (strain wPip).